The following is a 904-amino-acid chain: E3 SUMO-protein ligase SIZ1 (904 aa).

Acidic residues predominate over residues 1-13 (MINLEDYWEDETP). Residues 1 to 21 (MINLEDYWEDETPGPDREPTN) form a disordered region. Residues 34–68 (MELLKVSELKDICRSVSFPVSGRKAVLQDLIRNFL) enclose the SAP domain. Residues 122–170 (MEGPPTVQQQSPSVIRQSPTQRRKTSTTSSTSRAPPPTNPDASSSSSSF) are disordered. A compositionally biased stretch (polar residues) spans 127–136 (TVQQQSPSVI). S132 carries the phosphoserine modification. Residues 137–154 (RQSPTQRRKTSTTSSTSR) are compositionally biased toward low complexity. The PINIT domain maps to 162 to 314 (DASSSSSSFA…KLFGYIVEMI (153 aa)). Residues 344–431 (EDEEMGLTTT…LQNCQKNVEQ (88 aa)) form an SP-RING-type zinc finger. Positions 377, 379, 400, and 403 each coordinate Zn(2+). Disordered stretches follow at residues 443 to 584 (ILED…DDDR), 596 to 616 (STNT…TLDP), and 672 to 733 (SPDV…ISDS). Residues 444 to 454 (LEDDDDSDSDS) are compositionally biased toward acidic residues. The span at 501–511 (NNHDDSNRHSN) shows a compositional bias: basic and acidic residues. Positions 512–553 (DNNNNSIKNNDSHNKNNNNNNNNNNNNNDNNNSIENNDSNSN) are enriched in low complexity. 3 stretches are compositionally biased toward polar residues: residues 561–574 (RSNT…KNLM), 596–611 (STNT…SAPS), and 672–683 (SPDVSVSSPTPR). Positions 684–699 (NTASNASSSALSTPPL) are enriched in low complexity. The segment covering 721–733 (INSNSYTASISDS) has biased composition (polar residues). S794 carries the post-translational modification Phosphoserine. Residues 794–904 (SLPTTEAITR…QDYGKKYNSG (111 aa)) are required for localization at the bud neck. The segment covering 877–894 (RQLSNTSSTSPIMGTWKT) has biased composition (polar residues). Residues 877–904 (RQLSNTSSTSPIMGTWKTQDYGKKYNSG) form a disordered region.

It belongs to the PIAS family. Interacts with UBC9 and CDC3. Phosphorylated in early M-phase. In terms of processing, autosumoylated upon ethanol stress.

The protein localises to the cytoplasm. It localises to the nucleus. It is found in the bud neck. It participates in protein modification; protein sumoylation. Acts as an E3 ligase mediating SUMO/Smt3 attachment to septins and PCNA. May be involved in chromosome maintenance. This chain is E3 SUMO-protein ligase SIZ1 (SIZ1), found in Saccharomyces cerevisiae (strain ATCC 204508 / S288c) (Baker's yeast).